We begin with the raw amino-acid sequence, 368 residues long: Cyanide hydratase (368 aa).

The region spanning 6 to 285 (YKAAVVTSEP…DGLMYVDIDL (280 aa)) is the CN hydrolase domain. Residue Glu46 is the Proton acceptor of the active site. Lys128 is a catalytic residue. Cys163 functions as the Nucleophile in the catalytic mechanism. The interval 341 to 368 (LDRPLEEEDYRQGTDAGETEKASSNGHA) is disordered.

Belongs to the carbon-nitrogen hydrolase superfamily. Nitrilase family. Oligomer of dimers, forming left-handed helical fibers.

It carries out the reaction formamide = hydrogen cyanide + H2O. Catalyzes the hydration of cyanide to formamide. Degradation of cyanide may be important for plant pathogenic fungi in infection of cyanogenic plants. This is Cyanide hydratase from Microdochium sorghi (Zonate leaf spot disease fungus).